A 126-amino-acid polypeptide reads, in one-letter code: Ribosome-binding factor A (126 aa).

It belongs to the RbfA family. In terms of assembly, monomer. Binds 30S ribosomal subunits, but not 50S ribosomal subunits or 70S ribosomes.

The protein resides in the cytoplasm. Its function is as follows. One of several proteins that assist in the late maturation steps of the functional core of the 30S ribosomal subunit. Associates with free 30S ribosomal subunits (but not with 30S subunits that are part of 70S ribosomes or polysomes). Required for efficient processing of 16S rRNA. May interact with the 5'-terminal helix region of 16S rRNA. The protein is Ribosome-binding factor A of Clostridioides difficile (strain 630) (Peptoclostridium difficile).